Reading from the N-terminus, the 291-residue chain is Formamidopyrimidine-DNA glycosylase (291 aa).

Residue proline 2 is the Schiff-base intermediate with DNA of the active site. Glutamate 3 (proton donor) is an active-site residue. Lysine 58 (proton donor; for beta-elimination activity) is an active-site residue. The DNA site is built by histidine 100, arginine 123, and lysine 166. Residues 257–291 form an FPG-type zinc finger; sequence SVYGREGKECLHCGIPIVRILQSGRSSFYCSQCQK. Arginine 281 serves as the catalytic Proton donor; for delta-elimination activity.

The protein belongs to the FPG family. As to quaternary structure, monomer. Zn(2+) serves as cofactor.

The catalysed reaction is Hydrolysis of DNA containing ring-opened 7-methylguanine residues, releasing 2,6-diamino-4-hydroxy-5-(N-methyl)formamidopyrimidine.. It catalyses the reaction 2'-deoxyribonucleotide-(2'-deoxyribose 5'-phosphate)-2'-deoxyribonucleotide-DNA = a 3'-end 2'-deoxyribonucleotide-(2,3-dehydro-2,3-deoxyribose 5'-phosphate)-DNA + a 5'-end 5'-phospho-2'-deoxyribonucleoside-DNA + H(+). Functionally, involved in base excision repair of DNA damaged by oxidation or by mutagenic agents. Acts as a DNA glycosylase that recognizes and removes damaged bases. Has a preference for oxidized purines, such as 7,8-dihydro-8-oxoguanine (8-oxoG). Has AP (apurinic/apyrimidinic) lyase activity and introduces nicks in the DNA strand. Cleaves the DNA backbone by beta-delta elimination to generate a single-strand break at the site of the removed base with both 3'- and 5'-phosphates. This is Formamidopyrimidine-DNA glycosylase from Bartonella henselae (strain ATCC 49882 / DSM 28221 / CCUG 30454 / Houston 1) (Rochalimaea henselae).